The chain runs to 231 residues: Lipid A acyltransferase PagP (231 aa).

The first 23 residues, 1–23 (MNKLTVRNFIVGLLIVFSLNSFS), serve as a signal peptide directing secretion. Positions 24-43 (SPPSISNSSSNSIDENSPIN) are enriched in low complexity. The tract at residues 24 to 59 (SPPSISNSSSNSIDENSPINTFKISPDNQTSKKSDL) is disordered. Active-site residues include histidine 100, aspartate 145, and serine 146.

The protein belongs to the lipid A palmitoyltransferase family. Homodimer.

Its subcellular location is the cell outer membrane. It catalyses the reaction a lipid A + a 1,2-diacyl-sn-glycero-3-phosphocholine = a hepta-acyl lipid A + a 2-acyl-sn-glycero-3-phosphocholine. The catalysed reaction is a lipid IVA + a 1,2-diacyl-sn-glycero-3-phosphocholine = a lipid IVB + a 2-acyl-sn-glycero-3-phosphocholine. The enzyme catalyses a lipid IIA + a 1,2-diacyl-sn-glycero-3-phosphocholine = a lipid IIB + a 2-acyl-sn-glycero-3-phosphocholine. Its function is as follows. Transfers a fatty acid residue from the sn-1 position of a phospholipid to the N-linked hydroxyfatty acid chain on the proximal unit of lipid A or its precursors. This is Lipid A acyltransferase PagP from Legionella longbeachae serogroup 1 (strain NSW150).